Reading from the N-terminus, the 338-residue chain is Anthranilate phosphoribosyltransferase (338 aa).

5-phospho-alpha-D-ribose 1-diphosphate is bound by residues G81, 84–85 (GD), T89, 91–94 (NVST), 109–117 (KHGNRALSS), and A121. G81 contributes to the anthranilate binding site. Mg(2+) is bound at residue S93. N112 contacts anthranilate. R167 contributes to the anthranilate binding site. Residues D225 and E226 each contribute to the Mg(2+) site.

This sequence belongs to the anthranilate phosphoribosyltransferase family. Homodimer. Requires Mg(2+) as cofactor.

It catalyses the reaction N-(5-phospho-beta-D-ribosyl)anthranilate + diphosphate = 5-phospho-alpha-D-ribose 1-diphosphate + anthranilate. The protein operates within amino-acid biosynthesis; L-tryptophan biosynthesis; L-tryptophan from chorismate: step 2/5. In terms of biological role, catalyzes the transfer of the phosphoribosyl group of 5-phosphorylribose-1-pyrophosphate (PRPP) to anthranilate to yield N-(5'-phosphoribosyl)-anthranilate (PRA). In Chelativorans sp. (strain BNC1), this protein is Anthranilate phosphoribosyltransferase.